Reading from the N-terminus, the 210-residue chain is MGKGDPNKPRGKMSSYAFFVQTCREEHKKKHPDSSVNFAEFSKKCSERWKTMSAKEKSKFEDLAKSDKARYDREMKNYVPPKGDKKGKKKDPNAPKRPPSAFFLFCSEHRPKIKSEHPGLSIGDTAKKLGEMWSEQSAKDKQPYEQKAAKLKEKYEKDIAAYRAKGKSEVGKKGPGRPTGSKKKNEPEDEEEEEEEEDDEDEEEEDEDEE.

Residue K3 is modified to N6-acetyllysine. Positions 9–79 (PRGKMSSYAF…RYDREMKNYV (71 aa)) form a DNA-binding region, HMG box 1. C23 carries the cysteine sulfonic acid (-SO3H); alternate modification. A disulfide bridge links C23 with C45. K30 is modified (N6-acetyllysine). Position 35 is a phosphoserine (S35). At K43 the chain carries N6-acetyllysine. A Cysteine sulfonic acid (-SO3H); alternate modification is found at C45. Over residues 51–76 (TMSAKEKSKFEDLAKSDKARYDREMK) the composition is skewed to basic and acidic residues. Residues 51–102 (TMSAKEKSKFEDLAKSDKARYDREMKNYVPPKGDKKGKKKDPNAPKRPPSAF) form a disordered region. The residue at position 90 (K90) is an N6-acetyllysine. Residues 95-163 (PKRPPSAFFL…KYEKDIAAYR (69 aa)) constitute a DNA-binding region (HMG box 2). The residue at position 100 (S100) is a Phosphoserine. At C106 the chain carries Cysteine sulfonic acid (-SO3H). K114 and K141 each carry N6-acetyllysine. The segment covering 162–172 (YRAKGKSEVGK) has biased composition (basic and acidic residues). A disordered region spans residues 162-210 (YRAKGKSEVGKKGPGRPTGSKKKNEPEDEEEEEEEEDDEDEEEEDEDEE). Residues 165–180 (KGKSEVGKKGPGRPTG) form a required for chemotactic activity region. Residues 187–210 (PEDEEEEEEEEDDEDEEEEDEDEE) show a composition bias toward acidic residues.

Belongs to the HMGB family. As to quaternary structure, interacts with POU2F2, POU2F1 and POU3F1. Component of the RAG complex composed of core components RAG1 and RAG2, and associated component HMGB1 or HMGB2. Component of the SET complex, composed of at least ANP32A, APEX1, HMGB2, NME1, SET and TREX1. Directly interacts with SET. Interacts with LEF1. Reduction/oxidation of cysteine residues Cys-23, Cys-45 and Cys-106 and a possible intramolecular disulfide bond involving Cys-23 and Cys-45 give rise to different redox forms with specific functional activities in various cellular compartments: 1- fully reduced HMGB2 (HMGB2C23hC45hC106h), 2- disulfide HMGB2 (HMGB2C23-C45C106h) and 3- sulfonyl HMGB2 (HMGB2C23soC45soC106so).

Its subcellular location is the nucleus. The protein localises to the chromosome. It localises to the cytoplasm. The protein resides in the secreted. Its function is as follows. Multifunctional protein with various roles in different cellular compartments. May act in a redox sensitive manner. In the nucleus is an abundant chromatin-associated non-histone protein involved in transcription, chromatin remodeling and V(D)J recombination and probably other processes. Binds DNA with a preference to non-canonical DNA structures such as single-stranded DNA. Can bent DNA and enhance DNA flexibility by looping thus providing a mechanism to promote activities on various gene promoters by enhancing transcription factor binding and/or bringing distant regulatory sequences into close proximity. Involved in V(D)J recombination by acting as a cofactor of the RAG complex: acts by stimulating cleavage and RAG protein binding at the 23 bp spacer of conserved recombination signal sequences (RSS). Proposed to be involved in the innate immune response to nucleic acids by acting as a cytoplasmic promiscuous immunogenic DNA/RNA sensor which cooperates with subsequent discriminative sensing by specific pattern recognition receptors. In the extracellular compartment acts as a chemokine. Promotes proliferation and migration of endothelial cells implicating AGER/RAGE. Has antimicrobial activity in gastrointestinal epithelial tissues. Involved in inflammatory response to antigenic stimulus coupled with pro-inflammatory activity. May play a role in germ cell differentiation. Involved in modulation of neurogenesis probably by regulation of neural stem proliferation. Involved in articular cartilage surface maintenance implicating LEF1 and the Wnt/beta-catenin pathway. The chain is High mobility group protein B2 (Hmgb2) from Rattus norvegicus (Rat).